We begin with the raw amino-acid sequence, 1705 residues long: Alpha-protein kinase 3 (1705 aa).

Residues 1-10 (MGSRRAPSRG) are compositionally biased toward low complexity. The tract at residues 1-33 (MGSRRAPSRGWGAGGRSGAGGDGEDDGPVWIPS) is disordered. Residues 11–21 (WGAGGRSGAGG) are compositionally biased toward gly residues. The Ig-like 1 domain maps to 77-168 (PLFETTLKSR…GIVSCSGVLE (92 aa)). A compositionally biased stretch (basic and acidic residues) spans 211-221 (DTLRKLSPDRF). Disordered regions lie at residues 211 to 244 (DTLR…EPEG), 308 to 749 (LKEE…GPRA), 792 to 845 (GPLS…ERPG), 1082 to 1145 (GLAS…KFPG), and 1173 to 1226 (RAAG…MLEV). At serine 228 the chain carries Phosphoserine. The span at 308 to 342 (LKEESGAKKKKKDEESKQGLRKPELEKAAQSRRSS) shows a compositional bias: basic and acidic residues. The segment covering 370 to 382 (PRGRAARGPGSSG) has biased composition (low complexity). A compositionally biased stretch (polar residues) spans 495 to 504 (DSKPISSLSQ). Over residues 557 to 579 (TTTAPTMSASSSSDVASIGVSTS) the composition is skewed to low complexity. Residues 598-609 (TSANQRTGSKKN) show a composition bias toward polar residues. Over residues 647–657 (ESKRPQSDRSA) the composition is skewed to basic and acidic residues. Polar residues predominate over residues 666 to 676 (RAETQLETTQA). Over residues 679–700 (KIQEDRKAQADKGTQEDRRMQG) the composition is skewed to basic and acidic residues. Residues 708–729 (KGTQSEGSAPTAMEGQSEQEVA) show a composition bias toward polar residues. The span at 736–745 (SRTPKLPPTA) shows a compositional bias: pro residues. Basic and acidic residues predominate over residues 829 to 844 (AKQEDSPFQCPKEERP). Low complexity predominate over residues 1120-1131 (GQAAPGQGPSAE). Serine 1222 bears the Phosphoserine mark. The 89-residue stretch at 1274–1362 (PQVIRKIRVE…GSASTDFCLS (89 aa)) folds into the Ig-like 2 domain. Cysteine 1296 and cysteine 1346 are disulfide-bonded. Positions 1390 to 1625 (KGLADSGCWG…YCELLGLTPL (236 aa)) constitute an Alpha-type protein kinase domain. Residues 1628–1705 (PEAAHPQAKA…EEGSKAQGMR (78 aa)) form a disordered region. A compositionally biased stretch (polar residues) spans 1664 to 1696 (PQGTRKSAPSSKATPQASEPVTTQLLGQPPTQE).

Belongs to the protein kinase superfamily. Alpha-type protein kinase family. ALPK subfamily.

It is found in the nucleus. It carries out the reaction L-seryl-[protein] + ATP = O-phospho-L-seryl-[protein] + ADP + H(+). The catalysed reaction is L-threonyl-[protein] + ATP = O-phospho-L-threonyl-[protein] + ADP + H(+). Involved in cardiomyocyte differentiation. This is Alpha-protein kinase 3 from Homo sapiens (Human).